We begin with the raw amino-acid sequence, 1231 residues long: STE20-like serine/threonine-protein kinase (1231 aa).

Position 14 is a phosphoserine (S14). Residues 34–292 (WETIGELGDG…TSQLLQHPFV (259 aa)) enclose the Protein kinase domain. Residues 40-48 (LGDGAFGKV) and K63 each bind ATP. Catalysis depends on D155, which acts as the Proton acceptor. T183 bears the Phosphothreonine mark. S189 is subject to Phosphoserine. The tract at residues 309–351 (AEVTEEVEDGKEEDDDEEIENSLPIPTNKRASSDLSIASSEED) is disordered. Acidic residues predominate over residues 312-328 (TEEVEDGKEEDDDEEIE). Residues S330, S340, S341, S344, S347, S348, S354, and S372 each carry the phosphoserine modification. Residues 337-347 (KRASSDLSIAS) show a composition bias toward polar residues. The tract at residues 405-478 (PDRATELPES…KQPVLENKLV (74 aa)) is disordered. Basic and acidic residues-rich tracts occupy residues 407 to 428 (RATE…RLPD) and 446 to 478 (DHAV…NKLV). A Phosphoserine modification is found at S507. Basic and acidic residues predominate over residues 516-531 (THEKLRKDDTTQKDVI). The tract at residues 516 to 757 (THEKLRKDDT…TGSTADNSSI (242 aa)) is disordered. A phosphoserine mark is found at S536 and S554. Residues 601–613 (TDQKLVENTHEKQ) show a composition bias toward basic and acidic residues. The segment covering 615–624 (PISSETTLDT) has biased composition (polar residues). S641 and S661 each carry phosphoserine. Positions 641 to 660 (STEEVEVEGAVSETDEEDVQ) are enriched in acidic residues. Residues 683–692 (EAPAQVEVQV) are compositionally biased toward low complexity. A compositionally biased stretch (pro residues) spans 693–706 (PVPPQPSEPPPAPI). Residue S775 is modified to Phosphoserine. T810 carries the phosphothreonine modification. The residue at position 814 (S814) is a Phosphoserine. Residues 822-1065 (LRRQELRELR…LKNRQTQERA (244 aa)) adopt a coiled-coil conformation. The UVR domain maps to 871 to 906 (DQEIENLEKQQKQTIERLEQEHTNRLRDEAKRIKGE). The residue at position 1093 (T1093) is a Phosphothreonine. Positions 1105-1179 (SAQEEKRQKN…ELKEWREKLR (75 aa)) form a coiled coil.

Belongs to the protein kinase superfamily. STE Ser/Thr protein kinase family. STE20 subfamily. Proteolytically cleaved by caspase-3. Post-translationally, autophosphorylated. As to expression, ubiquitously expressed.

It localises to the cytoplasm. The enzyme catalyses L-seryl-[protein] + ATP = O-phospho-L-seryl-[protein] + ADP + H(+). It carries out the reaction L-threonyl-[protein] + ATP = O-phospho-L-threonyl-[protein] + ADP + H(+). Functionally, mediates apoptosis and actin stress fiber dissolution. The protein is STE20-like serine/threonine-protein kinase (SLK) of Cavia porcellus (Guinea pig).